A 157-amino-acid polypeptide reads, in one-letter code: Nicotinate dehydrogenase subunit A (157 aa).

The region spanning 3 to 79 (TTISLQVNGQ…GRNITTLEGL (77 aa)) is the 2Fe-2S ferredoxin-type domain. C41, C46, C49, and C61 together coordinate [2Fe-2S] cluster.

[2Fe-2S] cluster serves as cofactor.

The enzyme catalyses 2 Fe(III)-[cytochrome] + nicotinate + H2O = 2 Fe(II)-[cytochrome] + 6-hydroxynicotinate + 2 H(+). The protein operates within cofactor degradation; nicotinate degradation. Functionally, subunit of the two-component enzyme NicAB that mediates nicotinate hydroxylation, the first step in the aerobic nicotinate degradation pathway. Mediates conversion of nicotinate into 6-hydroxynicotinate (6HNA). The chain is Nicotinate dehydrogenase subunit A (nicA) from Pseudomonas putida (strain ATCC 47054 / DSM 6125 / CFBP 8728 / NCIMB 11950 / KT2440).